A 508-amino-acid polypeptide reads, in one-letter code: Vacuolar serine-type carboxypeptidase ATG42 (508 aa).

The first 24 residues, 1–24 (MKYLNLVFVLQLLISIKYASFGRA), serve as a signal peptide directing secretion. Cystine bridges form between C132-C375, C267-C281, C291-C314, C298-C307, and C336-C345. N-linked (GlcNAc...) asparagine glycosylation occurs at N163. The active site involves S219. N-linked (GlcNAc...) asparagine glycosylation is present at N242. N-linked (GlcNAc...) asparagine glycans are attached at residues N339 and N371. D415 is an active-site residue. C418 contributes to the substrate binding site. The active site involves H474. M475 contacts substrate.

This sequence belongs to the peptidase S10 family.

The protein resides in the vacuole lumen. It catalyses the reaction Release of a C-terminal amino acid with broad specificity.. Its function is as follows. Vacuolar serine-type carboxypeptidase involved in vacuolar zymogen activation, breakdown of the autophagic body, and autophagosome-dependent protein synthesis. Plays a key role in phytochelatin (PC) synthesis from glutathione (GSH) by cleaving the Gly from GSH and form the PC-peptides of the structure (gamma-Glu-Cys)2-Gly. Also involved in resistance to xenobiotics via the degradation of glutathione-S-conjugates. This is Vacuolar serine-type carboxypeptidase ATG42 from Saccharomyces cerevisiae (strain ATCC 204508 / S288c) (Baker's yeast).